The chain runs to 227 residues: Lipoprotein-releasing system ATP-binding protein LolD (227 aa).

The ABC transporter domain occupies 6-227 (LKIEGLRKTY…HLEDGVLVER (222 aa)). Residue 43–50 (APSGAGKS) coordinates ATP.

It belongs to the ABC transporter superfamily. Lipoprotein translocase (TC 3.A.1.125) family. In terms of assembly, the complex is composed of two ATP-binding proteins (LolD) and two transmembrane proteins (LolC and LolE).

It localises to the cell inner membrane. Functionally, part of the ABC transporter complex LolCDE involved in the translocation of mature outer membrane-directed lipoproteins, from the inner membrane to the periplasmic chaperone, LolA. Responsible for the formation of the LolA-lipoprotein complex in an ATP-dependent manner. This is Lipoprotein-releasing system ATP-binding protein LolD from Ruegeria sp. (strain TM1040) (Silicibacter sp.).